Here is a 1241-residue protein sequence, read N- to C-terminus: ATP-dependent helicase/nuclease subunit A (1241 aa).

Residues 12 to 485 (SQWTDDQWKA…IDLAKNFRSR (474 aa)) enclose the UvrD-like helicase ATP-binding domain. 33-40 (AAAGSGKT) contributes to the ATP binding site. A UvrD-like helicase C-terminal domain is found at 505 to 805 (GEIDYDADAE…RIMTIHKSKG (301 aa)).

It belongs to the helicase family. AddA subfamily. In terms of assembly, heterodimer of AddA and AddB/RexB. Mg(2+) serves as cofactor.

It catalyses the reaction Couples ATP hydrolysis with the unwinding of duplex DNA by translocating in the 3'-5' direction.. The catalysed reaction is ATP + H2O = ADP + phosphate + H(+). Its function is as follows. The heterodimer acts as both an ATP-dependent DNA helicase and an ATP-dependent, dual-direction single-stranded exonuclease. Recognizes the chi site generating a DNA molecule suitable for the initiation of homologous recombination. The AddA nuclease domain is required for chi fragment generation; this subunit has the helicase and 3' -&gt; 5' nuclease activities. This chain is ATP-dependent helicase/nuclease subunit A, found in Bacillus mycoides (strain KBAB4) (Bacillus weihenstephanensis).